A 106-amino-acid chain; its full sequence is Toxin-like structure LSTX-D7 (106 aa).

The N-terminal stretch at 1–20 (MMKVLVVFALLVTLISYSSS) is a signal peptide. Residues 21-41 (EGIDDLEADELLSLMANEQTR) constitute a propeptide that is removed on maturation. 4 disulfides stabilise this stretch: C45–C60, C52–C69, C59–C85, and C71–C83.

This sequence belongs to the neurotoxin 19 (CSTX) family. 02 (D7) subfamily. Expressed by the venom gland.

The protein localises to the secreted. The chain is Toxin-like structure LSTX-D7 from Lycosa singoriensis (Wolf spider).